We begin with the raw amino-acid sequence, 426 residues long: C4-dicarboxylate transport protein (426 aa).

8 helical membrane-spanning segments follow: residues Ser-4–Gly-24, Leu-44–Met-64, Ile-76–Val-96, Ile-142–Phe-162, Val-184–Met-204, Leu-222–Ala-242, Ile-326–Val-346, and Ile-352–Ile-372.

Belongs to the dicarboxylate/amino acid:cation symporter (DAACS) (TC 2.A.23) family.

The protein resides in the cell inner membrane. Responsible for the transport of dicarboxylates such as succinate, fumarate, and malate from the periplasm across the membrane. The sequence is that of C4-dicarboxylate transport protein from Edwardsiella ictaluri (strain 93-146).